We begin with the raw amino-acid sequence, 97 residues long: Plastocyanin A/B (97 aa).

One can recognise a Plastocyanin-like domain in the interval 1–97 (AEVKLGSDDG…AGMKGEVTVN (97 aa)). Positions 37, 82, 85, and 90 each coordinate Cu cation.

The protein belongs to the plastocyanin family. Cu(2+) is required as a cofactor.

Its subcellular location is the plastid. It localises to the chloroplast thylakoid membrane. In terms of biological role, participates in electron transfer between P700 and the cytochrome b6-f complex in photosystem I. The protein is Plastocyanin A/B (PETE) of Petroselinum crispum (Parsley).